Here is a 566-residue protein sequence, read N- to C-terminus: Malate synthase, glyoxysomal (566 aa).

R182 (proton acceptor) is an active-site residue. Residue D467 is the Proton donor of the active site. A Microbody targeting signal motif is present at residues 564–566 (SRL).

It belongs to the malate synthase family.

The protein resides in the glyoxysome. The catalysed reaction is glyoxylate + acetyl-CoA + H2O = (S)-malate + CoA + H(+). It functions in the pathway carbohydrate metabolism; glyoxylate cycle; (S)-malate from isocitrate: step 2/2. The protein is Malate synthase, glyoxysomal of Cucurbita maxima (Pumpkin).